Consider the following 478-residue polypeptide: Growth/differentiation factor 10 (478 aa).

A signal peptide spans 1–33; sequence MAHVPARTSPGPGPQLLLLLLPLFLLLLRDVAG. A propeptide spanning residues 34–368 is cleaved from the precursor; the sequence is SHRAPAWSAL…EKTMQKARRK (335 aa). N-linked (GlcNAc...) asparagine glycans are attached at residues Asn118, Asn156, and Asn281. The interval 266-319 is disordered; sequence YDPFPAGDPEPRAAPNNSADPRVRRAAQATGPLQDNELPGLDERPPRAHAQHFH. Cystine bridges form between Cys376–Cys443, Cys405–Cys475, and Cys409–Cys477. N-linked (GlcNAc...) asparagine glycosylation is present at Asn469.

This sequence belongs to the TGF-beta family. In terms of assembly, homodimer or heterodimer. Can form a non-covalent complex of the mature region and the pro-region. In terms of tissue distribution, expressed in femur, brain, lung, skeletal muscle, pancreas and testis.

It localises to the secreted. In terms of biological role, growth factor involved in osteogenesis and adipogenesis. Plays an inhibitory role in the process of osteoblast differentiation via SMAD2/3 pathway. Plays an inhibitory role in the process of adipogenesis. The chain is Growth/differentiation factor 10 from Homo sapiens (Human).